The chain runs to 364 residues: Ferrochelatase (364 aa).

2 residues coordinate Fe cation: His213 and Glu294.

It belongs to the ferrochelatase family.

It is found in the cytoplasm. It carries out the reaction heme b + 2 H(+) = protoporphyrin IX + Fe(2+). It functions in the pathway porphyrin-containing compound metabolism; protoheme biosynthesis; protoheme from protoporphyrin-IX: step 1/1. Functionally, catalyzes the ferrous insertion into protoporphyrin IX. The sequence is that of Ferrochelatase from Chromobacterium violaceum (strain ATCC 12472 / DSM 30191 / JCM 1249 / CCUG 213 / NBRC 12614 / NCIMB 9131 / NCTC 9757 / MK).